Here is a 293-residue protein sequence, read N- to C-terminus: Acetylglutamate kinase (293 aa).

Substrate-binding positions include glycine 68–glycine 69, arginine 90, and asparagine 189.

Belongs to the acetylglutamate kinase family. ArgB subfamily.

The protein resides in the cytoplasm. It carries out the reaction N-acetyl-L-glutamate + ATP = N-acetyl-L-glutamyl 5-phosphate + ADP. It functions in the pathway amino-acid biosynthesis; L-arginine biosynthesis; N(2)-acetyl-L-ornithine from L-glutamate: step 2/4. Catalyzes the ATP-dependent phosphorylation of N-acetyl-L-glutamate. In Mycobacterium ulcerans (strain Agy99), this protein is Acetylglutamate kinase.